The following is a 485-amino-acid chain: NADH-quinone oxidoreductase subunit N (485 aa).

14 consecutive transmembrane segments (helical) span residues 8 to 28, 35 to 55, 71 to 91, 105 to 125, 127 to 147, 159 to 179, 203 to 223, 235 to 255, 271 to 291, 297 to 317, 326 to 346, 373 to 393, 408 to 430, and 455 to 475; these read LIAL…MLSI, FLNA…LWFV, GFAM…CTFA, FYLL…ANHL, SLFL…GYAF, YTIL…LVYA, LLAG…LVPF, PAPV…GVVM, VVLA…ALSQ, LLGY…IALQ, VGVY…VVSL, AAVM…LGFI, WWLV…RVAV, and IVVL…QPLI.

It belongs to the complex I subunit 2 family. As to quaternary structure, NDH-1 is composed of 13 different subunits. Subunits NuoA, H, J, K, L, M, N constitute the membrane sector of the complex.

It is found in the cell inner membrane. It carries out the reaction a quinone + NADH + 5 H(+)(in) = a quinol + NAD(+) + 4 H(+)(out). In terms of biological role, NDH-1 shuttles electrons from NADH, via FMN and iron-sulfur (Fe-S) centers, to quinones in the respiratory chain. The immediate electron acceptor for the enzyme in this species is believed to be ubiquinone. Couples the redox reaction to proton translocation (for every two electrons transferred, four hydrogen ions are translocated across the cytoplasmic membrane), and thus conserves the redox energy in a proton gradient. The chain is NADH-quinone oxidoreductase subunit N from Escherichia coli O81 (strain ED1a).